Here is a 126-residue protein sequence, read N- to C-terminus: Fluoride-specific ion channel FluC (126 aa).

4 helical membrane-spanning segments follow: residues 4 to 24 (PLLS…LLGL), 33 to 53 (IPLG…FAMA), 67 to 87 (FVIT…IEIV), and 97 to 117 (MAML…CLGL). Residues G74 and T77 each coordinate Na(+).

The protein belongs to the fluoride channel Fluc/FEX (TC 1.A.43) family.

The protein resides in the cell inner membrane. It carries out the reaction fluoride(in) = fluoride(out). Na(+) is not transported, but it plays an essential structural role and its presence is essential for fluoride channel function. Fluoride-specific ion channel. Important for reducing fluoride concentration in the cell, thus reducing its toxicity. In Acinetobacter baumannii (strain ACICU), this protein is Fluoride-specific ion channel FluC.